Here is an 890-residue protein sequence, read N- to C-terminus: DNA mismatch repair protein MutS (890 aa).

ATP is bound at residue 645-652; sequence GPNMAGKS.

Belongs to the DNA mismatch repair MutS family.

Its function is as follows. This protein is involved in the repair of mismatches in DNA. It is possible that it carries out the mismatch recognition step. This protein has a weak ATPase activity. This is DNA mismatch repair protein MutS from Rickettsia rickettsii (strain Iowa).